Here is a 122-residue protein sequence, read N- to C-terminus: Small ribosomal subunit protein uS13 (122 aa).

Residues 95 to 122 (GLPVRGQRTKTNSRTRKGRRKTVANKKK) form a disordered region. Residues 101-122 (QRTKTNSRTRKGRRKTVANKKK) are compositionally biased toward basic residues.

It belongs to the universal ribosomal protein uS13 family. Part of the 30S ribosomal subunit. Forms a loose heterodimer with protein S19. Forms two bridges to the 50S subunit in the 70S ribosome.

Functionally, located at the top of the head of the 30S subunit, it contacts several helices of the 16S rRNA. In the 70S ribosome it contacts the 23S rRNA (bridge B1a) and protein L5 of the 50S subunit (bridge B1b), connecting the 2 subunits; these bridges are implicated in subunit movement. Contacts the tRNAs in the A and P-sites. The protein is Small ribosomal subunit protein uS13 of Protochlamydia amoebophila (strain UWE25).